We begin with the raw amino-acid sequence, 565 residues long: Adenine deaminase (565 aa).

The protein belongs to the metallo-dependent hydrolases superfamily. Adenine deaminase family. Requires Mn(2+) as cofactor.

It catalyses the reaction adenine + H2O + H(+) = hypoxanthine + NH4(+). This is Adenine deaminase from Methylobacterium nodulans (strain LMG 21967 / CNCM I-2342 / ORS 2060).